The following is a 102-amino-acid chain: Small ribosomal subunit protein uS10 (102 aa).

The protein belongs to the universal ribosomal protein uS10 family. As to quaternary structure, part of the 30S ribosomal subunit.

Involved in the binding of tRNA to the ribosomes. The polypeptide is Small ribosomal subunit protein uS10 (Gluconobacter oxydans (strain 621H) (Gluconobacter suboxydans)).